The primary structure comprises 801 residues: U-box domain-containing protein 44 (801 aa).

The 80-residue stretch at 22-101 (HIYEAFICPL…EEWRSRNDAA (80 aa)) folds into the U-box domain. ARM repeat units follow at residues 134 to 173 (RSNR…VVVE), 176 to 215 (DESK…ELSK), 218 to 259 (ALCE…NMER), 261 to 300 (EEIV…ELPL), 301 to 340 (NNDV…KISS), 342 to 386 (EGSA…NIVN), 390 to 429 (DFDK…GLTS), 435 to 475 (PKVV…NLSP), and 480 to 521 (ELAK…ELPD).

Interacts with AAO3. Binds to SD129. Expressed in leaves, root vasculature and guard cells.

It carries out the reaction S-ubiquitinyl-[E2 ubiquitin-conjugating enzyme]-L-cysteine + [acceptor protein]-L-lysine = [E2 ubiquitin-conjugating enzyme]-L-cysteine + N(6)-ubiquitinyl-[acceptor protein]-L-lysine.. Its pathway is protein modification; protein ubiquitination. Functionally, functions as an E3 ubiquitin-protein ligase. Prevents premature senescence probably by targeting proteins involved in this process for degradation. Promotes the degradation of AAO3 and thus represses abscisic acid (ABA) biosynthesis. The protein is U-box domain-containing protein 44 (PUB44) of Arabidopsis thaliana (Mouse-ear cress).